The chain runs to 368 residues: Probable dual-specificity RNA methyltransferase RlmN (368 aa).

The active-site Proton acceptor is the Glu-108. Residues 114–345 (HAYGNSVCVS…VTVRRGLGAD (232 aa)) form the Radical SAM core domain. A disulfide bond links Cys-121 and Cys-350. [4Fe-4S] cluster-binding residues include Cys-128, Cys-132, and Cys-135. S-adenosyl-L-methionine is bound by residues 175 to 176 (GE), Ser-207, 230 to 232 (SLH), and Asn-307. Cys-350 serves as the catalytic S-methylcysteine intermediate.

It belongs to the radical SAM superfamily. RlmN family. [4Fe-4S] cluster serves as cofactor.

The protein localises to the cytoplasm. The enzyme catalyses adenosine(2503) in 23S rRNA + 2 reduced [2Fe-2S]-[ferredoxin] + 2 S-adenosyl-L-methionine = 2-methyladenosine(2503) in 23S rRNA + 5'-deoxyadenosine + L-methionine + 2 oxidized [2Fe-2S]-[ferredoxin] + S-adenosyl-L-homocysteine. It carries out the reaction adenosine(37) in tRNA + 2 reduced [2Fe-2S]-[ferredoxin] + 2 S-adenosyl-L-methionine = 2-methyladenosine(37) in tRNA + 5'-deoxyadenosine + L-methionine + 2 oxidized [2Fe-2S]-[ferredoxin] + S-adenosyl-L-homocysteine. Specifically methylates position 2 of adenine 2503 in 23S rRNA and position 2 of adenine 37 in tRNAs. The sequence is that of Probable dual-specificity RNA methyltransferase RlmN from Pelotomaculum thermopropionicum (strain DSM 13744 / JCM 10971 / SI).